Here is a 334-residue protein sequence, read N- to C-terminus: Holliday junction branch migration complex subunit RuvB (334 aa).

The segment at 1-179 (MTHKISVLHQ…FAFTGRVDYY (179 aa)) is large ATPase domain (RuvB-L). ATP-binding positions include Leu18, Arg19, Gly60, Lys63, Thr64, Ser65, 126–128 (EDF), Arg169, Tyr179, and Arg216. Residue Thr64 participates in Mg(2+) binding. Residues 180–250 (TDEDLVSILS…VAEKALAMLL (71 aa)) form a small ATPAse domain (RuvB-S) region. The segment at 253–334 (NLGLNEIDIK…RNPKDRWGEE (82 aa)) is head domain (RuvB-H). The DNA site is built by Arg308 and Arg313.

This sequence belongs to the RuvB family. As to quaternary structure, homohexamer. Forms an RuvA(8)-RuvB(12)-Holliday junction (HJ) complex. HJ DNA is sandwiched between 2 RuvA tetramers; dsDNA enters through RuvA and exits via RuvB. An RuvB hexamer assembles on each DNA strand where it exits the tetramer. Each RuvB hexamer is contacted by two RuvA subunits (via domain III) on 2 adjacent RuvB subunits; this complex drives branch migration. In the full resolvosome a probable DNA-RuvA(4)-RuvB(12)-RuvC(2) complex forms which resolves the HJ.

It is found in the cytoplasm. It carries out the reaction ATP + H2O = ADP + phosphate + H(+). Its function is as follows. The RuvA-RuvB-RuvC complex processes Holliday junction (HJ) DNA during genetic recombination and DNA repair, while the RuvA-RuvB complex plays an important role in the rescue of blocked DNA replication forks via replication fork reversal (RFR). RuvA specifically binds to HJ cruciform DNA, conferring on it an open structure. The RuvB hexamer acts as an ATP-dependent pump, pulling dsDNA into and through the RuvAB complex. RuvB forms 2 homohexamers on either side of HJ DNA bound by 1 or 2 RuvA tetramers; 4 subunits per hexamer contact DNA at a time. Coordinated motions by a converter formed by DNA-disengaged RuvB subunits stimulates ATP hydrolysis and nucleotide exchange. Immobilization of the converter enables RuvB to convert the ATP-contained energy into a lever motion, pulling 2 nucleotides of DNA out of the RuvA tetramer per ATP hydrolyzed, thus driving DNA branch migration. The RuvB motors rotate together with the DNA substrate, which together with the progressing nucleotide cycle form the mechanistic basis for DNA recombination by continuous HJ branch migration. Branch migration allows RuvC to scan DNA until it finds its consensus sequence, where it cleaves and resolves cruciform DNA. The polypeptide is Holliday junction branch migration complex subunit RuvB (Chlamydia trachomatis serovar A (strain ATCC VR-571B / DSM 19440 / HAR-13)).